The chain runs to 273 residues: Octanoyltransferase (273 aa).

A BPL/LPL catalytic domain is found at 35–254; that stretch reads DRVPDTCLLL…HLRDILENAE (220 aa). Substrate-binding positions include 73 to 80, 184 to 186, and 197 to 199; these read RGGKITWH, AIG, and GFA. The Acyl-thioester intermediate role is filled by Cys215.

This sequence belongs to the LipB family.

The protein resides in the cytoplasm. It carries out the reaction octanoyl-[ACP] + L-lysyl-[protein] = N(6)-octanoyl-L-lysyl-[protein] + holo-[ACP] + H(+). The protein operates within protein modification; protein lipoylation via endogenous pathway; protein N(6)-(lipoyl)lysine from octanoyl-[acyl-carrier-protein]: step 1/2. Its function is as follows. Catalyzes the transfer of endogenously produced octanoic acid from octanoyl-acyl-carrier-protein onto the lipoyl domains of lipoate-dependent enzymes. Lipoyl-ACP can also act as a substrate although octanoyl-ACP is likely to be the physiological substrate. The chain is Octanoyltransferase from Streptomyces griseus subsp. griseus (strain JCM 4626 / CBS 651.72 / NBRC 13350 / KCC S-0626 / ISP 5235).